The chain runs to 443 residues: Thymidine phosphorylase (443 aa).

This sequence belongs to the thymidine/pyrimidine-nucleoside phosphorylase family. As to quaternary structure, homodimer.

It carries out the reaction thymidine + phosphate = 2-deoxy-alpha-D-ribose 1-phosphate + thymine. Its pathway is pyrimidine metabolism; dTMP biosynthesis via salvage pathway; dTMP from thymine: step 1/2. Its function is as follows. The enzymes which catalyze the reversible phosphorolysis of pyrimidine nucleosides are involved in the degradation of these compounds and in their utilization as carbon and energy sources, or in the rescue of pyrimidine bases for nucleotide synthesis. The polypeptide is Thymidine phosphorylase (Shewanella denitrificans (strain OS217 / ATCC BAA-1090 / DSM 15013)).